Here is a 366-residue protein sequence, read N- to C-terminus: MYHVPEMRLHYPLVNTQSNAAITPTRSYDNTLPSFNELSHQSTINLPFVQRETPNAYANVAQLATSPTQAKSGYYCRYYAVPFPTYPQQPQSPYQQAVLPYATIPNSNFQPSSFPVMAVMPPEVQFDGSFLNTLHPHTELPPIIQNTNDTSVARPNNLKSIAAASPTVTATTRTPGVSSTSVLKPRVITTMWEDENTICYQVEANGISVVRRADNNMINGTKLLNVTKMTRGRRDGILRSEKVREVVKIGSMHLKGVWIPFERAYILAQREQILDHLYPLFVKDIESIVDARKPSNKASLTPKSSPAPIKQEPSDNKHEIATEIKPKSIDALSNGASTQGAGELPHLKINHIDTEAQTSRAKNELS.

The 107-residue stretch at 186–292 (RVITTMWEDE…KDIESIVDAR (107 aa)) folds into the HTH APSES-type domain. The segment at residues 220–241 (GTKLLNVTKMTRGRRDGILRSE) is a DNA-binding region (H-T-H motif). A disordered region spans residues 294–366 (PSNKASLTPK…QTSRAKNELS (73 aa)). The span at 312–328 (EPSDNKHEIATEIKPKS) shows a compositional bias: basic and acidic residues.

The protein belongs to the EFG1/PHD1/stuA family.

The protein localises to the nucleus. Functionally, putative transcription factor that functions in pseudohyphal growth. The protein is Putative transcription factor PHD1 (PHD1) of Saccharomyces cerevisiae (strain ATCC 204508 / S288c) (Baker's yeast).